Reading from the N-terminus, the 226-residue chain is ATP-dependent dethiobiotin synthetase BioD (226 aa).

14 to 19 is a binding site for ATP; sequence GIGKTF. Residue Thr18 participates in Mg(2+) binding. Lys39 is an active-site residue. Ser43 lines the substrate pocket. ATP is bound by residues Asp56, 117–120, 177–178, 206–208, and Asn213; these read EGVG, NT, and PHI. Mg(2+)-binding residues include Asp56 and Glu117.

The protein belongs to the dethiobiotin synthetase family. As to quaternary structure, homodimer. Mg(2+) is required as a cofactor.

Its subcellular location is the cytoplasm. The enzyme catalyses (7R,8S)-7,8-diammoniononanoate + CO2 + ATP = (4R,5S)-dethiobiotin + ADP + phosphate + 3 H(+). It participates in cofactor biosynthesis; biotin biosynthesis; biotin from 7,8-diaminononanoate: step 1/2. Its function is as follows. Catalyzes a mechanistically unusual reaction, the ATP-dependent insertion of CO2 between the N7 and N8 nitrogen atoms of 7,8-diaminopelargonic acid (DAPA, also called 7,8-diammoniononanoate) to form a ureido ring. The protein is ATP-dependent dethiobiotin synthetase BioD of Xylella fastidiosa (strain 9a5c).